A 307-amino-acid polypeptide reads, in one-letter code: Olfactory receptor 13G1 (307 aa).

The Extracellular portion of the chain corresponds to 1 to 22 (MNHSVVTEFIILGLTKKPELQG). Residue N2 is glycosylated (N-linked (GlcNAc...) asparagine). A helical membrane pass occupies residues 23–43 (IIFLFFLIVYLVAFLGNMLII). Over 44 to 51 (IAKIYNNT) the chain is Cytoplasmic. Residues 52-72 (LHTPMYVFLLTLAVVDIICTT) form a helical membrane-spanning segment. Over 73-96 (SIIPKMLGTMLTSENTISYAGCMS) the chain is Extracellular. C94 and C186 form a disulfide bridge. A helical transmembrane segment spans residues 97 to 117 (QLFLFTWSLGAEMVLFTTMAY). The Cytoplasmic portion of the chain corresponds to 118-136 (DRYVAICFPLHYSTIMNHH). The helical transmembrane segment at 137–157 (MCVALLSMVMAIAVTNSWVHT) threads the bilayer. The Extracellular portion of the chain corresponds to 158–194 (ALIMRLTFCGPNTIDHFFCEIPPLLALSCSPVRINEV). A helical transmembrane segment spans residues 195–214 (MVYVADITLAIGDFILTCIS). Residues 215-234 (YGFIIVAILRIRTVEGKRKA) lie on the Cytoplasmic side of the membrane. The helical transmembrane segment at 235 to 255 (FSTCSSHLTVVTLYYSPVIYT) threads the bilayer. Over 256–268 (YIRPASSYTFERD) the chain is Extracellular. The chain crosses the membrane as a helical span at residues 269 to 289 (KVVAALYTLVTPTLNPMVYSF). Residues 290–307 (QNREMQAGIRKVFAFLKH) are Cytoplasmic-facing.

The protein belongs to the G-protein coupled receptor 1 family.

The protein localises to the cell membrane. In terms of biological role, odorant receptor. This is Olfactory receptor 13G1 (OR13G1) from Homo sapiens (Human).